We begin with the raw amino-acid sequence, 170 residues long: Ureidoglycolate lyase (170 aa).

Belongs to the ureidoglycolate lyase family. Homodimer. The cofactor is Ni(2+).

The enzyme catalyses (S)-ureidoglycolate = urea + glyoxylate. It participates in nitrogen metabolism; (S)-allantoin degradation. Catalyzes the catabolism of the allantoin degradation intermediate (S)-ureidoglycolate, generating urea and glyoxylate. Involved in the utilization of allantoin as nitrogen source. The protein is Ureidoglycolate lyase of Pseudomonas syringae pv. tomato (strain ATCC BAA-871 / DC3000).